Consider the following 134-residue polypeptide: Waprin-Phi1 (134 aa).

The first 23 residues, 1–23, serve as a signal peptide directing secretion; that stretch reads MTLRRGSCPLLLFSLVGLLTTCA. WAP domains lie at 36-82 and 83-133; these read VAEK…SCQI and PDEK…TTAR. 8 disulfide bridges follow: Cys43–Cys72, Cys55–Cys76, Cys59–Cys71, Cys65–Cys80, Cys90–Cys120, Cys103–Cys124, Cys107–Cys119, and Cys113–Cys129.

The protein belongs to the venom waprin family. In terms of tissue distribution, expressed by the venom gland.

It is found in the secreted. Damages membranes of susceptible bacteria. Has no hemolytic activity. Not toxic to mice. Does not inhibit the proteinases elastase and cathepsin G. This is Waprin-Phi1 from Philodryas olfersii (Green snake).